Reading from the N-terminus, the 360-residue chain is UDP-N-acetylglucosamine--N-acetylmuramyl-(pentapeptide) pyrophosphoryl-undecaprenol N-acetylglucosamine transferase (360 aa).

Residues 12–14 (TAG), serine 198, and glutamine 289 contribute to the UDP-N-acetyl-alpha-D-glucosamine site.

It belongs to the glycosyltransferase 28 family. MurG subfamily.

Its subcellular location is the cell membrane. It carries out the reaction Mur2Ac(oyl-L-Ala-gamma-D-Glu-L-Lys-D-Ala-D-Ala)-di-trans,octa-cis-undecaprenyl diphosphate + UDP-N-acetyl-alpha-D-glucosamine = beta-D-GlcNAc-(1-&gt;4)-Mur2Ac(oyl-L-Ala-gamma-D-Glu-L-Lys-D-Ala-D-Ala)-di-trans,octa-cis-undecaprenyl diphosphate + UDP + H(+). The protein operates within cell wall biogenesis; peptidoglycan biosynthesis. Cell wall formation. Catalyzes the transfer of a GlcNAc subunit on undecaprenyl-pyrophosphoryl-MurNAc-pentapeptide (lipid intermediate I) to form undecaprenyl-pyrophosphoryl-MurNAc-(pentapeptide)GlcNAc (lipid intermediate II). The sequence is that of UDP-N-acetylglucosamine--N-acetylmuramyl-(pentapeptide) pyrophosphoryl-undecaprenol N-acetylglucosamine transferase from Streptococcus equi subsp. zooepidemicus (strain MGCS10565).